The primary structure comprises 283 residues: Bifunctional protein FolD 2 (283 aa).

Residues 165–167, Thr192, and Val233 each bind NADP(+); that span reads GRG.

This sequence belongs to the tetrahydrofolate dehydrogenase/cyclohydrolase family. As to quaternary structure, homodimer.

The catalysed reaction is (6R)-5,10-methylene-5,6,7,8-tetrahydrofolate + NADP(+) = (6R)-5,10-methenyltetrahydrofolate + NADPH. It carries out the reaction (6R)-5,10-methenyltetrahydrofolate + H2O = (6R)-10-formyltetrahydrofolate + H(+). Its pathway is one-carbon metabolism; tetrahydrofolate interconversion. Its function is as follows. Catalyzes the oxidation of 5,10-methylenetetrahydrofolate to 5,10-methenyltetrahydrofolate and then the hydrolysis of 5,10-methenyltetrahydrofolate to 10-formyltetrahydrofolate. The protein is Bifunctional protein FolD 2 of Saccharopolyspora erythraea (strain ATCC 11635 / DSM 40517 / JCM 4748 / NBRC 13426 / NCIMB 8594 / NRRL 2338).